The chain runs to 144 residues: Ferredoxin-thioredoxin reductase catalytic chain, chloroplastic (144 aa).

The transit peptide at 1–31 (MKALQASIAYSFPISSPAASPRRFSRVIRAQ) directs the protein to the chloroplast. C83 serves as a coordination point for [4Fe-4S] cluster. Residue C85 is the Nucleophile of the active site. C85 and C115 are disulfide-bonded. [4Fe-4S] cluster is bound by residues C102, C104, and C113.

The protein belongs to the ferredoxin thioredoxin reductase beta subunit family. In terms of assembly, heterodimer of subunit A (variable subunit) and subunit B (catalytic subunit). Heterodimeric FTR forms a complex with ferredoxin and thioredoxin. [4Fe-4S] cluster serves as cofactor.

The protein localises to the plastid. It is found in the chloroplast. It carries out the reaction [thioredoxin]-disulfide + 2 reduced [2Fe-2S]-[ferredoxin] + 2 H(+) = [thioredoxin]-dithiol + 2 oxidized [2Fe-2S]-[ferredoxin]. Functionally, catalytic subunit of the ferredoxin-thioredoxin reductase (FTR), which catalyzes the two-electron reduction of thioredoxins by the electrons provided by reduced ferredoxin. In Spinacia oleracea (Spinach), this protein is Ferredoxin-thioredoxin reductase catalytic chain, chloroplastic (FTRC).